Consider the following 405-residue polypeptide: Peroxisomal membrane protein PEX13 (405 aa).

Residues 1 to 11 are compositionally biased toward pro residues; the sequence is MASQPPPPPKP. Positions 1 to 71 are disordered; the sequence is MASQPPPPPK…SQQTGSNNVN (71 aa). Residues 1–136 lie on the Peroxisomal matrix side of the membrane; sequence MASQPPPPPK…SSRGAFQSIE (136 aa). Residues 61–71 are compositionally biased toward polar residues; that stretch reads PSQQTGSNNVN. The helical transmembrane segment at 137-157 threads the bilayer; that stretch reads SIVHAFASVSMMMDATFSAVY. The tract at residues 147-235 is targeting to peroxisomes; it reads MMMDATFSAV…EDQATNSAKS (89 aa). At 158-176 the chain is on the cytoplasmic side; that stretch reads NSFRAVLDVANHFSRLKIH. Residues 177-194 traverse the membrane as a helical segment; that stretch reads FTKVFSAFALVRTIRYLY. An interaction with PEX19 region spans residues 177–198; the sequence is FTKVFSAFALVRTIRYLYRRLQ. Topologically, residues 195–235 are peroxisomal matrix; sequence RRLQWMMGLRRGSENEDLWAESEGTVACLSAEDQATNSAKS. A helical transmembrane segment spans residues 236-256; that stretch reads WPIFLFFAVILGGPYLIWKLL. Residues 257-405 are Cytoplasmic-facing; sequence STHNDEVTDN…TGKNGDKQDL (149 aa). The SH3 domain maps to 274–338; the sequence is DDHVVARAEY…PANYVKILGK (65 aa). Phosphoserine is present on serine 356.

Belongs to the peroxin-13 family. In terms of assembly, interacts (via SH3 domain) with PEX14 (via SH3-binding motif); forming the PEX13-PEX14 docking complex. Interacts with PEX19.

It localises to the peroxisome membrane. Component of the PEX13-PEX14 docking complex, a translocon channel that specifically mediates the import of peroxisomal cargo proteins bound to PEX5 receptor. The PEX13-PEX14 docking complex forms a large import pore which can be opened to a diameter of about 9 nm. Mechanistically, PEX5 receptor along with cargo proteins associates with the PEX14 subunit of the PEX13-PEX14 docking complex in the cytosol, leading to the insertion of the receptor into the organelle membrane with the concomitant translocation of the cargo into the peroxisome matrix. Involved in the import of PTS1- and PTS2-type containing proteins. The polypeptide is Peroxisomal membrane protein PEX13 (Mus musculus (Mouse)).